Consider the following 95-residue polypeptide: Small ribosomal subunit protein bS20 (95 aa).

This sequence belongs to the bacterial ribosomal protein bS20 family.

Binds directly to 16S ribosomal RNA. This is Small ribosomal subunit protein bS20 from Ehrlichia ruminantium (strain Gardel).